We begin with the raw amino-acid sequence, 463 residues long: RuvB-like 2 (463 aa).

Alanine 2 bears the N-acetylalanine mark. Lysine 9 participates in a covalent cross-link: Glycyl lysine isopeptide (Lys-Gly) (interchain with G-Cter in SUMO2). Glycine 77 to threonine 84 lines the ATP pocket. Serine 437 bears the Phosphoserine mark. Residues lysine 444 and lysine 456 each participate in a glycyl lysine isopeptide (Lys-Gly) (interchain with G-Cter in SUMO2) cross-link.

Belongs to the RuvB family. In terms of assembly, forms homohexameric rings. Can form a dodecamer with RUVBL1 made of two stacked hexameric rings; however, even though RUVBL1 and RUVBL2 are present in equimolar ratio, the oligomeric status of each hexamer is not known. Oligomerization may regulate binding to nucleic acids and conversely, binding to nucleic acids may affect the dodecameric assembly. Interaction of the complex with DHX34 results in conformational changes of the N-terminus of the RUVBL2 subunits, resulting in loss of nucleotide binding ability and ATP hydrolysis of the complex. Interacts with the transcriptional activation domain of MYC. Interacts with ATF2. Component of the RNA polymerase II holoenzyme complex. May also act to bridge the LEF1/TCF1-CTNNB1 complex and TBP. Component of the NuA4 histone acetyltransferase complex which contains the catalytic subunit KAT5/TIP60 and the subunits EP400, TRRAP/PAF400, BRD8/SMAP, EPC1, DMAP1/DNMAP1, RUVBL1/TIP49, RUVBL2, ING3, actin, ACTL6A/BAF53A, MORF4L1/MRG15, MORF4L2/MRGX, MRGBP, YEATS4/GAS41, VPS72/YL1 and MEAF6. The NuA4 complex interacts with MYC and the adenovirus E1A protein. RUVBL2 interacts with EP400. Component of a NuA4-related complex which contains EP400, TRRAP/PAF400, SRCAP, BRD8/SMAP, EPC1, DMAP1/DNMAP1, RUVBL1/TIP49, RUVBL2, actin, ACTL6A/BAF53A, VPS72 and YEATS4/GAS41. Interacts with NPAT. Component of the chromatin-remodeling INO80 complex; specifically part of a complex module associated with the helicase ATP-binding and the helicase C-terminal domain of INO80. Component of some MLL1/MLL complex, at least composed of the core components KMT2A/MLL1, ASH2L, HCFC1/HCF1, WDR5 and RBBP5, as well as the facultative components BACC1, CHD8, E2F6, HSP70, INO80C, KANSL1, LAS1L, MAX, MCRS1, MGA, MYST1/MOF, PELP1, PHF20, PRP31, RING2, RUVB1/TIP49A, RUVB2/TIP49B, SENP3, TAF1, TAF4, TAF6, TAF7, TAF9 and TEX10. Interacts with IGHMBP2. Interacts with TELO2. Interacts with HINT1. Component of a SWR1-like complex. Component of the R2TP complex composed at least of RUVBL1, RUVBL2, RPAP3 and PIHD1. Component of the PAQosome complex which is responsible for the biogenesis of several protein complexes and which consists of R2TP complex members RUVBL1, RUVBL2, RPAP3 and PIH1D1, URI complex members PFDN2, PFDN6, PDRG1, UXT and URI1 as well as ASDURF, POLR2E and DNAAF10/WDR92. Interacts with ITFG1. Interacts with ZMYND10. Interacts with WAC; WAC positively regulates MTOR activity by promoting the assembly of the TTT complex composed of TELO2, TTI1 and TTI2 and the RUVBL complex composed of RUVBL1 and RUVBL2 into the TTT-RUVBL complex which leads to the dimerization of the mTORC1 complex and its subsequent activation. Forms a complex with APPL1 and APPL2. Interacts with ZNHIT2 (via HIT-type zinc finger) in the presence of ATP or ADP; shows a stronger interaction in the presence of ADP. The RUVBL1/RUVBL2 complex interacts with ZNHIT1 (via HIT-type zinc finger), ZNHIT3 (via HIT-type zinc finger), ZNHIT6 (via HIT-type zinc finger) and DDX59/ZNHIT5 (via HIT-type zinc finger) in the presence of ADP. Interacts with NOPCHAP1; the interaction is direct and disrupted upon ATP binding. Interacts with SMG1. (Microbial infection) Interacts with Mumps L polymerase; this interaction regulates the viral transcription. Ubiquitously expressed. Highly expressed in testis and thymus.

Its subcellular location is the nucleus matrix. It localises to the nucleus. It is found in the nucleoplasm. The protein localises to the cytoplasm. The protein resides in the membrane. Its subcellular location is the dynein axonemal particle. It catalyses the reaction ATP + H2O = ADP + phosphate + H(+). Possesses single-stranded DNA-stimulated ATPase and ATP-dependent DNA helicase (5' to 3') activity; hexamerization is thought to be critical for ATP hydrolysis and adjacent subunits in the ring-like structure contribute to the ATPase activity. Component of the NuA4 histone acetyltransferase complex which is involved in transcriptional activation of select genes principally by acetylation of nucleosomal histones H4 and H2A. This modification may both alter nucleosome -DNA interactions and promote interaction of the modified histones with other proteins which positively regulate transcription. This complex may be required for the activation of transcriptional programs associated with oncogene and proto-oncogene mediated growth induction, tumor suppressor mediated growth arrest and replicative senescence, apoptosis, and DNA repair. The NuA4 complex ATPase and helicase activities seem to be, at least in part, contributed by the association of RUVBL1 and RUVBL2 with EP400. NuA4 may also play a direct role in DNA repair when recruited to sites of DNA damage. Component of a SWR1-like complex that specifically mediates the removal of histone H2A.Z/H2AZ1 from the nucleosome. Proposed core component of the chromatin remodeling INO80 complex which exhibits DNA- and nucleosome-activated ATPase activity and catalyzes ATP-dependent nucleosome sliding. Plays an essential role in oncogenic transformation by MYC and also modulates transcriptional activation by the LEF1/TCF1-CTNNB1 complex. May also inhibit the transcriptional activity of ATF2. Involved in the endoplasmic reticulum (ER)-associated degradation (ERAD) pathway where it negatively regulates expression of ER stress response genes. May play a role in regulating the composition of the U5 snRNP complex. In Homo sapiens (Human), this protein is RuvB-like 2 (RUVBL2).